The following is a 62-amino-acid chain: Alpha-conotoxin ViIA (62 aa).

The signal sequence occupies residues 1 to 18; that stretch reads MGMRMMFVVFLLVVFASS. Positions 19–45 are excised as a propeptide; sequence VTLDRASYGRYASPVDRASALIAQAIL. 2 cysteine pairs are disulfide-bonded: Cys48-Cys54 and Cys49-Cys61.

Belongs to the conotoxin A superfamily. Post-translationally, the toxin is inactive on the alpha-3-beta-2 nAChR when the disulfide bond connectivity is C1-C4 and C2-C3 (ViIA-I) (IC(50)&gt;10000 nM). Expressed by the venom duct.

The protein localises to the secreted. In terms of biological role, alpha-conotoxins act on postsynaptic membranes, they bind to the nicotinic acetylcholine receptors (nAChR) and thus inhibit them. This toxin selectively inhibits nicotinic acetylcholine receptor (nAChR) alpha-3-beta-2 subtype (IC(50)=845.5 nM). This is Alpha-conotoxin ViIA from Conus virgo (Virgin cone).